A 133-amino-acid polypeptide reads, in one-letter code: Magnetosome protein MamC (133 aa).

Topologically, residues 1 to 5 are cytoplasmic; sequence MAAFN. The helical transmembrane segment at 6-26 threads the bilayer; the sequence is LALYLSKSIPGVGVLGGVIGG. The Lumenal segment spans residues 27–67; the sequence is SAALAKNLKAKQRGEITTEEAVIDTGKEALGAGLATTVSAY. Residues 37–57 are magnetite interacting component (MIC) binds magnetite; that stretch reads KQRGEITTEEAVIDTGKEALG. The helical transmembrane segment at 68–88 threads the bilayer; it reads AAGVVGGGLVVSLGTAFAVAV. The Cytoplasmic portion of the chain corresponds to 89–133; that stretch reads AGKYAWDYGMEQMEAKLQEKKHQEQGGQTYGDNPDPFDPQELETP. The disordered stretch occupies residues 105 to 133; that stretch reads LQEKKHQEQGGQTYGDNPDPFDPQELETP.

The protein belongs to the magnetosome MamC family. Probably interacts with MamA.

Its subcellular location is the magnetosome membrane. Its function is as follows. Probably helps control the size of magnetite crystals; in vitro synthesis of magnetite yields larger and more well-developed magnetite crystals in the presence of purified MamC. Binds Fe(3+). The lumenal domain probably binds magnetite crystals, affecting crystal size and shape. Purified MamC self-assembles into micelles in the presence of ferric chloride hexahydrate (FeCl(3).6H(2)O); both oxygen and iron are present in the proteinaceous micelles. Whether this is relevant in vivo is unknown. The polypeptide is Magnetosome protein MamC (Magnetococcus marinus (strain ATCC BAA-1437 / JCM 17883 / MC-1)).